Consider the following 1024-residue polypeptide: Beta-galactosidase (1024 aa).

The substrate site is built by asparagine 103 and aspartate 202. Aspartate 202 serves as a coordination point for Na(+). Mg(2+) is bound by residues glutamate 417, histidine 419, and glutamate 462. Substrate contacts are provided by residues glutamate 462 and 538–541 (EYAH). Catalysis depends on glutamate 462, which acts as the Proton donor. The active-site Nucleophile is glutamate 538. Asparagine 598 lines the Mg(2+) pocket. Residues phenylalanine 602 and asparagine 605 each coordinate Na(+). Substrate-binding residues include asparagine 605 and tryptophan 1000.

It belongs to the glycosyl hydrolase 2 family. Homotetramer. Requires Mg(2+) as cofactor. Na(+) serves as cofactor.

The catalysed reaction is Hydrolysis of terminal non-reducing beta-D-galactose residues in beta-D-galactosides.. This chain is Beta-galactosidase, found in Escherichia coli O6:K15:H31 (strain 536 / UPEC).